A 668-amino-acid chain; its full sequence is UvrABC system protein B (668 aa).

The region spanning 25–414 (RGLHAGARFQ…IVEQLIRPTG (390 aa)) is the Helicase ATP-binding domain. 38 to 45 (GVTGSGKT) contributes to the ATP binding site. A Beta-hairpin motif is present at residues 91–114 (YYDYYQPESYVPARDLYIEKDASI). A Helicase C-terminal domain is found at 431-594 (DICQRVKACS…TIKKSIEDIL (164 aa)). The 36-residue stretch at 627–662 (KKMVQALRLHMKVCARELRFEEAALIRDKILQLQRQ) folds into the UVR domain.

It belongs to the UvrB family. As to quaternary structure, forms a heterotetramer with UvrA during the search for lesions. Interacts with UvrC in an incision complex.

Its subcellular location is the cytoplasm. The UvrABC repair system catalyzes the recognition and processing of DNA lesions. A damage recognition complex composed of 2 UvrA and 2 UvrB subunits scans DNA for abnormalities. Upon binding of the UvrA(2)B(2) complex to a putative damaged site, the DNA wraps around one UvrB monomer. DNA wrap is dependent on ATP binding by UvrB and probably causes local melting of the DNA helix, facilitating insertion of UvrB beta-hairpin between the DNA strands. Then UvrB probes one DNA strand for the presence of a lesion. If a lesion is found the UvrA subunits dissociate and the UvrB-DNA preincision complex is formed. This complex is subsequently bound by UvrC and the second UvrB is released. If no lesion is found, the DNA wraps around the other UvrB subunit that will check the other stand for damage. The sequence is that of UvrABC system protein B from Treponema pallidum (strain Nichols).